The primary structure comprises 193 residues: uncharacterized protein (193 aa).

Residues Thr-86–Gly-181 adopt a coiled-coil conformation.

This is an uncharacterized protein from Streptococcus pyogenes serotype M6 (strain ATCC BAA-946 / MGAS10394).